A 112-amino-acid chain; its full sequence is Signal recognition particle 19 kDa protein (112 aa).

Belongs to the SRP19 family. As to quaternary structure, part of the signal recognition particle protein translocation system, which is composed of SRP and FtsY. Archaeal SRP consists of a 7S RNA molecule of 300 nucleotides and two protein subunits: SRP54 and SRP19.

It localises to the cytoplasm. In terms of biological role, involved in targeting and insertion of nascent membrane proteins into the cytoplasmic membrane. Binds directly to 7S RNA and mediates binding of the 54 kDa subunit of the SRP. The chain is Signal recognition particle 19 kDa protein from Aeropyrum pernix (strain ATCC 700893 / DSM 11879 / JCM 9820 / NBRC 100138 / K1).